Reading from the N-terminus, the 1192-residue chain is MSELDDLLNEMLAESEAALNGQSTINLNNNNSNNNNNNNNNGNSATKISFQEQMPNGNGNSSTTTTTAAQQSATEKRKSRLSQHPSNLNEGGFDYLDTLLNDMSDESIRNSIKTDNSRIKSLRLTSTFDLESTLKDLEETFMKDSSIQNKRKPSSYLSKNLSPPSNPSNIISNNNASTLPLPPPPSQQDDVVIIAKLPPPVSISLPPPPTTEELPLPPPSTEELQLPPPPPTTTTADEQILTDSVKNGNPILKRVSSERAIILTKEAIDAADLLDEMIESFGGIPEPNGNNSLPKEIKTTSIPTPIVTPSTTTSTNTTTAATVNKLNASKSPNGTLTTRPAAKLGAPVDIQVSSPKAPTPIPTLSSPSPSQSAAPQPAAPQPTPTSQPQPPTTTVSTPVSPTFKDSDQLLDDMISHFKESNSNLLTSSSNLDPSAPKVVYTSQQFYPLSVEEQSLQSKVKVQLTPDEQVIQKILGNNDLDDDITNKNNDNNSNGNNNNKELIDEQNQIEQQQSDKSWYIKAQPSDIIGSGNNGTTQRAGIHKDKRIVMKQWNFITSQATPMLFNEIEQLVAIKHPNILALAGASFDNQTFTTFTEYITGSNLDIVIKNLDEKNELQLILRLSEEIASAMSFLHSFNIVHRSLHPKNILLNSDLKIYIKDYGFTSLKDETLKKKFMSFQLKNQLLHTQYLAPELFNVLSGSKGGYDTKVDVFSFGVLLWEMFARDIKLSDLKSNTVNGYTHYLRPPLPNCPFTIEKLIKLCLSTDPSVRPTFTTILKILRQPLHTIQRFNKPTQQQQQQQQQDQQQQQPEQQLTSSTSSTSTQDSLVSQEQVEEKIKNEMNNLLNPNKRFNESLDPEKRVKIEKIANVVKDLISQPTLLNLHRASQTIDQLCKNVENIEYLLEADFVPLIFQLMDQPYDEIQLSCLKQFSTLIEHNEEIMNLFRNLLGINILMETLNSQKENILFITLRLLSQLSNGADREENREQILIKGGIPLLINLLSHQNELIRLQILWCLTLLLESNSVQVEFVKLGGVNQLLDMMVHSINSGFDLRVASALARVISLKSVQDQINLGHYRERVVKKYLSLLGDTQFEALRMLGLEAIACLVSNKDSQFILTASNIVDLLLSYLDPNSTSMAPQMTALKIILVLSVNPIHIPYLKSSNIIEPLQYLKSSPHPSIQKAVEKILMLVSSK.

Disordered regions lie at residues 23–90 (STIN…NLNE), 144–189 (DSSI…SQQD), 201–236 (VSIS…TTTA), 301–406 (SIPT…FKDS), and 478–499 (DLDD…NNNK). Residues 26–43 (NLNNNNSNNNNNNNNNGN) are compositionally biased toward low complexity. Positions 44–60 (SATKISFQEQMPNGNGN) are enriched in polar residues. 2 stretches are compositionally biased toward low complexity: residues 61–73 (SSTT…QQSA) and 154–175 (SSYL…SNNN). A compositionally biased stretch (pro residues) spans 201 to 232 (VSISLPPPPTTEELPLPPPSTEELQLPPPPPT). Positions 301-324 (SIPTPIVTPSTTTSTNTTTAATVN) are enriched in low complexity. Over residues 325–338 (KLNASKSPNGTLTT) the composition is skewed to polar residues. Over residues 362-376 (PTLSSPSPSQSAAPQ) the composition is skewed to low complexity. Over residues 377-391 (PAAPQPTPTSQPQPP) the composition is skewed to pro residues. Composition is skewed to low complexity over residues 392–402 (TTTVSTPVSPT) and 485–498 (NKNN…NNNN). A Protein kinase domain is found at 521 to 783 (AQPSDIIGSG…ILKILRQPLH (263 aa)). Residues 527 to 535 (IGSGNNGTT) and K549 contribute to the ATP site. The segment at 790-831 (KPTQQQQQQQQQDQQQQQPEQQLTSSTSSTSTQDSLVSQEQV) is disordered. The segment covering 791–828 (PTQQQQQQQQQDQQQQQPEQQLTSSTSSTSTQDSLVSQ) has biased composition (low complexity).

Belongs to the protein kinase superfamily. TKL Ser/Thr protein kinase family.

This is Probable inactive serine/threonine-protein kinase DDB_G0280131 from Dictyostelium discoideum (Social amoeba).